The following is a 306-amino-acid chain: MTQLNTQFGKVAVLLGGNSAEREVSLRSGQAVLNALQNHGINAIAFDPKERPLWELNELAIDRVFIALHGRGGEDGTVQGALEFMNLPYTGSNVLGSALAMDKVRCKHLFKSAGLSTAPYTVVDAKKGFDAAAIMQQFKKVMVKPSHEGSSIGMAQASTPQELEDALSNAFKFDSQVLVEQWISGREFTITVLGDEVLPVIEMTTPNGFYDYQAKYQATTTQYHCPADLSPADTEHLQAMALDAFDLVGASGWGRVDAMQDQQGNFYLLEVNTVPGMTEKSLVPMAAKAHGASFEQLVVRILEQTL.

The ATP-grasp domain maps to 107–303 (KHLFKSAGLS…FEQLVVRILE (197 aa)). 134–189 (IMQQFKKVMVKPSHEGSSIGMAQASTPQELEDALSNAFKFDSQVLVEQWISGREFT) contacts ATP. Residues Asp257, Glu270, and Asn272 each coordinate Mg(2+).

Belongs to the D-alanine--D-alanine ligase family. Mg(2+) serves as cofactor. The cofactor is Mn(2+).

It localises to the cytoplasm. The catalysed reaction is 2 D-alanine + ATP = D-alanyl-D-alanine + ADP + phosphate + H(+). It participates in cell wall biogenesis; peptidoglycan biosynthesis. Cell wall formation. In Pseudoalteromonas translucida (strain TAC 125), this protein is D-alanine--D-alanine ligase.